Consider the following 151-residue polypeptide: Small ribosomal subunit protein uS9 (151 aa).

The span at 1-19 (MTETTPAPQTPAAPAGPAQ) shows a compositional bias: low complexity. Disordered regions lie at residues 1 to 20 (MTET…PAQS) and 121 to 151 (KAGF…YSKR). The segment covering 127–136 (RDPRATERKK) has biased composition (basic and acidic residues). Over residues 137–151 (YGLKKARKAPQYSKR) the composition is skewed to basic residues.

This sequence belongs to the universal ribosomal protein uS9 family.

This chain is Small ribosomal subunit protein uS9 (rpsI), found in Mycobacterium bovis (strain ATCC BAA-935 / AF2122/97).